A 20-amino-acid chain; its full sequence is KELLDADGDILLNGGXYYIV.

The protein belongs to the protease inhibitor I3 (leguminous Kunitz-type inhibitor) family. Heterodimer of an 'A' and a 'B' chain linked by a disulfide bond.

In terms of biological role, inhibits trypsin and alpha-chymotrypsin. This chain is Trypsin inhibitor A chain, found in Albizia julibrissin (Silk tree).